Consider the following 75-residue polypeptide: Endogenous retrovirus group K member 5 Np9 protein (75 aa).

Residues T22–K43 form a disordered region. Over residues T32–K43 the composition is skewed to basic and acidic residues.

The protein localises to the nucleus. Its function is as follows. May possess a function in tumorigenesis. This is Endogenous retrovirus group K member 5 Np9 protein (ERVK-5) from Homo sapiens (Human).